The following is a 131-amino-acid chain: MSWQAYVDEHLMCEIEGHHLASAAILGHDGTVWAQSADFPQFKPEEITGIMKDFDEPGHLAPTGMFVATAKYMVIQGEPGAVIRGKKGAGGITIKKTGQALVVGIYDEPMTPGQCNMVVERLGDYLLKQGL.

An intrachain disulfide couples Cys-13 to Cys-115. The short motif at 81-97 is the Involved in PIP2 interaction element; sequence AVIRGKKGAGGITIKKT. Residue Thr-111 is modified to Phosphothreonine.

Belongs to the profilin family. In terms of assembly, occurs in many kinds of cells as a complex with monomeric actin in a 1:1 ratio. Post-translationally, phosphorylated by MAP kinases.

Its subcellular location is the cytoplasm. It localises to the cytoskeleton. In terms of biological role, binds to actin and affects the structure of the cytoskeleton. At high concentrations, profilin prevents the polymerization of actin, whereas it enhances it at low concentrations. The polypeptide is Profilin-4 (Phleum pratense (Common timothy)).